Consider the following 212-residue polypeptide: Large ribosomal subunit protein uL3 (212 aa).

A disordered region spans residues 130 to 158 (KRGSMTHGSKNHRLPGSTGAGTTPGRVYP).

The protein belongs to the universal ribosomal protein uL3 family. As to quaternary structure, part of the 50S ribosomal subunit. Forms a cluster with proteins L14 and L19.

In terms of biological role, one of the primary rRNA binding proteins, it binds directly near the 3'-end of the 23S rRNA, where it nucleates assembly of the 50S subunit. In Gloeothece citriformis (strain PCC 7424) (Cyanothece sp. (strain PCC 7424)), this protein is Large ribosomal subunit protein uL3.